The primary structure comprises 189 residues: Glycerol-3-phosphate acyltransferase (189 aa).

A run of 5 helical transmembrane segments spans residues 1-21, 51-71, 77-97, 111-131, and 151-171; these read MFWL…AILL, LAIL…LIAS, LQDQ…PLYF, MLLG…LLTF, and LLAW…LLIV.

Belongs to the PlsY family. Probably interacts with PlsX.

The protein resides in the cell inner membrane. The catalysed reaction is an acyl phosphate + sn-glycerol 3-phosphate = a 1-acyl-sn-glycero-3-phosphate + phosphate. The protein operates within lipid metabolism; phospholipid metabolism. Its function is as follows. Catalyzes the transfer of an acyl group from acyl-phosphate (acyl-PO(4)) to glycerol-3-phosphate (G3P) to form lysophosphatidic acid (LPA). This enzyme utilizes acyl-phosphate as fatty acyl donor, but not acyl-CoA or acyl-ACP. The protein is Glycerol-3-phosphate acyltransferase of Pseudomonas fluorescens (strain Pf0-1).